Here is a 352-residue protein sequence, read N- to C-terminus: Photosystem II D2 protein (352 aa).

A helical membrane pass occupies residues 40 to 60 (CAFLSIGGWLTGTTFVTSWYT). Histidine 117 contacts chlorophyll a. The chain crosses the membrane as a helical span at residues 124-140 (GFCLRQIEIARLVGIRP). The pheophytin a site is built by glutamine 129 and asparagine 142. Residues 152 to 165 (VFVSVFLMYPLGQS) traverse the membrane as a helical segment. Histidine 197 contacts chlorophyll a. The helical transmembrane segment at 207-227 (GALLCAIHGATVENTLFQDGE) threads the bilayer. A plastoquinone contacts are provided by histidine 214 and phenylalanine 261. Histidine 214 is a Fe cation binding site. Histidine 268 contacts Fe cation. A helical membrane pass occupies residues 278–294 (GLWMSSIGIVGLAFNLR).

Belongs to the reaction center PufL/M/PsbA/D family. PSII is composed of 1 copy each of membrane proteins PsbA, PsbB, PsbC, PsbD, PsbE, PsbF, PsbH, PsbI, PsbJ, PsbK, PsbL, PsbM, PsbT, PsbX, PsbY, PsbZ, Psb30/Ycf12, peripheral proteins PsbO, CyanoQ (PsbQ), PsbU, PsbV and a large number of cofactors. It forms dimeric complexes. The D1/D2 heterodimer binds P680, chlorophylls that are the primary electron donor of PSII, and subsequent electron acceptors. It shares a non-heme iron and each subunit binds pheophytin, quinone, additional chlorophylls, carotenoids and lipids. There is also a Cl(-1) ion associated with D1 and D2, which is required for oxygen evolution. The PSII complex binds additional chlorophylls, carotenoids and specific lipids. serves as cofactor.

The protein localises to the cellular thylakoid membrane. It catalyses the reaction 2 a plastoquinone + 4 hnu + 2 H2O = 2 a plastoquinol + O2. Photosystem II (PSII) is a light-driven water:plastoquinone oxidoreductase that uses light energy to abstract electrons from H(2)O, generating O(2) and a proton gradient subsequently used for ATP formation. It consists of a core antenna complex that captures photons, and an electron transfer chain that converts photonic excitation into a charge separation. The D1/D2 (PsbA/PsbD) reaction center heterodimer binds P680, the primary electron donor of PSII as well as several subsequent electron acceptors. D2 is needed for assembly of a stable PSII complex. In Trichodesmium erythraeum (strain IMS101), this protein is Photosystem II D2 protein.